Here is a 204-residue protein sequence, read N- to C-terminus: Elongation factor Ts (204 aa).

The interval 80-83 is involved in Mg(2+) ion dislocation from EF-Tu; that stretch reads TDFV.

This sequence belongs to the EF-Ts family.

Its subcellular location is the cytoplasm. Associates with the EF-Tu.GDP complex and induces the exchange of GDP to GTP. It remains bound to the aminoacyl-tRNA.EF-Tu.GTP complex up to the GTP hydrolysis stage on the ribosome. The protein is Elongation factor Ts of Thermoanaerobacter sp. (strain X514).